The primary structure comprises 143 residues: Deoxyuridine 5'-triphosphate nucleotidohydrolase (143 aa).

Substrate-binding positions include Arg-63 to Gly-65, Asn-76, Thr-80 to Asp-82, and Lys-90.

The protein belongs to the dUTPase family. Requires Mg(2+) as cofactor.

The catalysed reaction is dUTP + H2O = dUMP + diphosphate + H(+). It participates in pyrimidine metabolism; dUMP biosynthesis; dUMP from dCTP (dUTP route): step 2/2. Functionally, this enzyme is involved in nucleotide metabolism: it produces dUMP, the immediate precursor of thymidine nucleotides and it decreases the intracellular concentration of dUTP so that uracil cannot be incorporated into DNA. The protein is Deoxyuridine 5'-triphosphate nucleotidohydrolase of Clostridioides difficile (Peptoclostridium difficile).